Consider the following 333-residue polypeptide: Beta-ketoacyl-[acyl-carrier-protein] synthase III (333 aa).

Active-site residues include Cys-116 and His-258. Residues 259-263 (QANQR) form an ACP-binding region. The active site involves Asn-288.

Belongs to the thiolase-like superfamily. FabH family. In terms of assembly, homodimer.

Its subcellular location is the cytoplasm. It carries out the reaction malonyl-[ACP] + acetyl-CoA + H(+) = 3-oxobutanoyl-[ACP] + CO2 + CoA. It functions in the pathway lipid metabolism; fatty acid biosynthesis. Catalyzes the condensation reaction of fatty acid synthesis by the addition to an acyl acceptor of two carbons from malonyl-ACP. Catalyzes the first condensation reaction which initiates fatty acid synthesis and may therefore play a role in governing the total rate of fatty acid production. Possesses both acetoacetyl-ACP synthase and acetyl transacylase activities. Its substrate specificity determines the biosynthesis of branched-chain and/or straight-chain of fatty acids. This chain is Beta-ketoacyl-[acyl-carrier-protein] synthase III, found in Microcystis aeruginosa (strain NIES-843 / IAM M-2473).